Reading from the N-terminus, the 343-residue chain is ATP-dependent (S)-NAD(P)H-hydrate dehydratase (343 aa).

The N-terminal 42 residues, 1–42 (MAVCPYGAAAVVMALLSAAIAFHCSPLLAVLQRALSLHTAHA), are a transit peptide targeting the mitochondrion. Residues 49-340 (LFQLVRNIVP…AEVGAAFSKL (292 aa)) enclose the YjeF C-terminal domain. Lysine 63 bears the N6-acetyllysine mark. Phosphotyrosine is present on tyrosine 81. (6S)-NADPHX contacts are provided by residues glycine 149 and 202 to 208 (NHVEFSR). ATP-binding positions include 242-246 (KGEQD) and 261-270 (GSSRRCGGQG). Aspartate 271 provides a ligand contact to (6S)-NADPHX.

Belongs to the NnrD/CARKD family. Mg(2+) is required as a cofactor.

The protein resides in the mitochondrion. The catalysed reaction is (6S)-NADHX + ATP = ADP + phosphate + NADH + H(+). The enzyme catalyses (6S)-NADPHX + ATP = ADP + phosphate + NADPH + H(+). Functionally, catalyzes the dehydration of the S-form of NAD(P)HX at the expense of ATP, which is converted to ADP. Together with NAD(P)HX epimerase, which catalyzes the epimerization of the S- and R-forms, the enzyme allows the repair of both epimers of NAD(P)HX, a damaged form of NAD(P)H that is a result of enzymatic or heat-dependent hydration. This Rattus norvegicus (Rat) protein is ATP-dependent (S)-NAD(P)H-hydrate dehydratase.